The sequence spans 92 residues: Movement protein (92 aa).

Residues valine 38–phenylalanine 58 traverse the membrane as a helical segment.

Belongs to the mastrevirus movement protein family. In terms of assembly, interacts with the capsid protein (CP). Part of a MP-CP-viral DNA complex.

The protein resides in the host membrane. In terms of biological role, involved in the viral transport within, and between cells. The chain is Movement protein from Phaseolus vulgaris (Kidney bean).